The chain runs to 1772 residues: Merozoite surface protein 1 (1772 aa).

The first 18 residues, M1–K18, serve as a signal peptide directing secretion. A glycan (N-linked (GlcNAc...) asparagine) is linked at N54. Residues T290–G319 form a disordered region. Over residues A305–G319 the composition is skewed to low complexity. N-linked (GlcNAc...) asparagine glycosylation is found at N406 and N646. The tract at residues K703–T796 is disordered. Positions S724 to T796 are enriched in low complexity. Residue N829 is glycosylated (N-linked (GlcNAc...) asparagine). Residues A924 to P1070 form a disordered region. Composition is skewed to low complexity over residues T930–Q946 and S956–S1052. Residues N1018 and N1090 are each glycosylated (N-linked (GlcNAc...) asparagine). The interval G1362–D1383 is disordered. 4 N-linked (GlcNAc...) asparagine glycosylation sites follow: N1408, N1446, N1541, and N1629. 2 consecutive EGF-like domains span residues H1661–N1703 and N1704–S1752. The cysteines at positions 1663 and 1675 are disulfide-linked. A glycan (N-linked (GlcNAc...) asparagine) is linked at N1680. Cystine bridges form between C1687-C1699, C1707-C1720, C1714-C1734, and C1736-C1750. Residue S1751 is the site of GPI-anchor amidated serine attachment. A propeptide spans S1752–F1772 (removed in mature form).

Forms a complex composed of subunits p83, p30, p38, and p42 which remain non-covalently associated; the complex is formed at the merozoite surface prior to egress from host erythrocytes. In terms of processing, the p230 precursor is cleaved by SUB1 prior to merozoite egress into 4 subunits p83, p30, p38, and p42 which remain non-covalently associated. In a second processing step during erythrocyte invasion, p42 is cleaved by SUB2 into p33 and p19; the latter remains attached to the merozoite surface via its GPI-anchor and stays on the surface during the subsequent ring stage.

The protein localises to the cell membrane. It is found in the secreted. Functionally, during the asexual blood stage, involved in merozoite egress from host erythrocytes possibly via its interaction with the host cytoskeleton protein spectrin resulting in the destabilization of the host cytoskeleton and thus leading to erythrocyte cell membrane rupture. Involved in the binding to host erythrocytes and is required for host erythrocyte invasion. The chain is Merozoite surface protein 1 from Plasmodium yoelii yoelii.